We begin with the raw amino-acid sequence, 62 residues long: Photosystem II reaction center protein Z (62 aa).

2 consecutive transmembrane segments (helical) span residues Ala-8 to Ala-28 and Phe-41 to Ile-61.

It belongs to the PsbZ family. In terms of assembly, PSII is composed of 1 copy each of membrane proteins PsbA, PsbB, PsbC, PsbD, PsbE, PsbF, PsbH, PsbI, PsbJ, PsbK, PsbL, PsbM, PsbT, PsbY, PsbZ, Psb30/Ycf12, at least 3 peripheral proteins of the oxygen-evolving complex and a large number of cofactors. It forms dimeric complexes.

The protein localises to the plastid. The protein resides in the chloroplast thylakoid membrane. Functionally, may control the interaction of photosystem II (PSII) cores with the light-harvesting antenna, regulates electron flow through the 2 photosystem reaction centers. PSII is a light-driven water plastoquinone oxidoreductase, using light energy to abstract electrons from H(2)O, generating a proton gradient subsequently used for ATP formation. This is Photosystem II reaction center protein Z from Marchantia polymorpha (Common liverwort).